Reading from the N-terminus, the 178-residue chain is Ribosomal RNA small subunit methyltransferase G (178 aa).

S-adenosyl-L-methionine contacts are provided by residues Gly54, Leu59, 105–106 (LE), and Arg120.

The protein belongs to the methyltransferase superfamily. RNA methyltransferase RsmG family.

It localises to the cytoplasm. It carries out the reaction guanosine(527) in 16S rRNA + S-adenosyl-L-methionine = N(7)-methylguanosine(527) in 16S rRNA + S-adenosyl-L-homocysteine. In terms of biological role, specifically methylates the N7 position of guanine in position 527 of 16S rRNA. The polypeptide is Ribosomal RNA small subunit methyltransferase G (Helicobacter pylori (strain J99 / ATCC 700824) (Campylobacter pylori J99)).